A 346-amino-acid polypeptide reads, in one-letter code: Uroporphyrinogen decarboxylase (346 aa).

Substrate-binding positions include 21 to 25 (RQAGR), Phe-40, Asp-71, Tyr-146, Ser-201, and His-316.

Belongs to the uroporphyrinogen decarboxylase family. As to quaternary structure, homodimer.

It localises to the cytoplasm. The catalysed reaction is uroporphyrinogen III + 4 H(+) = coproporphyrinogen III + 4 CO2. The protein operates within porphyrin-containing compound metabolism; protoporphyrin-IX biosynthesis; coproporphyrinogen-III from 5-aminolevulinate: step 4/4. Catalyzes the decarboxylation of four acetate groups of uroporphyrinogen-III to yield coproporphyrinogen-III. In Rickettsia conorii (strain ATCC VR-613 / Malish 7), this protein is Uroporphyrinogen decarboxylase.